The chain runs to 118 residues: V-type proton ATPase subunit G 2 (118 aa).

The tract at residues 23 to 90 (ADARKRKARR…VQGMQSSQQR (68 aa)) is disordered. The segment covering 35-55 (QAKEEAQMEVEQYRREREQEF) has biased composition (basic and acidic residues). Composition is skewed to polar residues over residues 56–69 (QSKQ…QGNL) and 78–89 (RRQVQGMQSSQQ).

This sequence belongs to the V-ATPase G subunit family. V-ATPase is a heteromultimeric enzyme made up of two complexes: the ATP-hydrolytic V1 complex and the proton translocation V0 complex. The V1 complex consists of three catalytic AB heterodimers that form a heterohexamer, three peripheral stalks each consisting of EG heterodimers, one central rotor including subunits D and F, and the regulatory subunits C and H. The proton translocation complex V0 consists of the proton transport subunit a, a ring of proteolipid subunits c9c'', rotary subunit d, subunits e and f, and the accessory subunits ATP6AP1/Ac45 and ATP6AP2/PRR.

Its subcellular location is the melanosome. The protein resides in the cytoplasmic vesicle. The protein localises to the clathrin-coated vesicle membrane. Subunit of the V1 complex of vacuolar(H+)-ATPase (V-ATPase), a multisubunit enzyme composed of a peripheral complex (V1) that hydrolyzes ATP and a membrane integral complex (V0) that translocates protons. V-ATPase is responsible for acidifying and maintaining the pH of intracellular compartments and in some cell types, is targeted to the plasma membrane, where it is responsible for acidifying the extracellular environment. The chain is V-type proton ATPase subunit G 2 (ATP6V1G2) from Macaca mulatta (Rhesus macaque).